The primary structure comprises 471 residues: MRRGERRVAGGSGSESPLLEGRRSTESEVYDDGTNTFFWRAHTLTVLFILTCALGYVTLLEETPQDTAYNTKRGIVASILVFLCFGVTQAKDGPFSRPHPAYWRFWLCVSVVYELFLIFILFQTVHDGRQFLKYVDPRLGVPLPERDYGGNCLIYDADNKTDPFHNIWDKLDGFVPAHFIGWYLKTLMIRDWWMCMIISVMFEFLEYSLEHQLPNFSECWWDHWIMDVLLCNGLGIYCGMKTLEWLSLKTYKWQGLWNIPTYKGKMKRIAFQFTPYSWVRFEWKPASSLHRWLAVCGIILVFLLAELNTFYLKFVLWMPPEHYLVLLRLVFFVNVGGVAMREIYDFMDELKPHRKLGQQAWLVAAITVTELLIVVKYDPHTLTLSLPFYISQCWTLGSILVLTWTVWRFFLRDITMRYKETRRQKQQSHQAINNGDGHPGPEDDLPGTGTAEEEGTTNDGVPAEEGPSAAS.

The tract at residues 1–26 (MRRGERRVAGGSGSESPLLEGRRSTE) is disordered. Topologically, residues 1 to 40 (MRRGERRVAGGSGSESPLLEGRRSTESEVYDDGTNTFFWR) are cytoplasmic. A phosphoserine mark is found at serine 12, serine 14, and serine 16. A helical transmembrane segment spans residues 41–61 (AHTLTVLFILTCALGYVTLLE). Residues 62–74 (ETPQDTAYNTKRG) lie on the Lumenal side of the membrane. A helical membrane pass occupies residues 75 to 95 (IVASILVFLCFGVTQAKDGPF). At 96–104 (SRPHPAYWR) the chain is on the cytoplasmic side. The chain crosses the membrane as a helical span at residues 105-125 (FWLCVSVVYELFLIFILFQTV). Residues 126–291 (HDGRQFLKYV…EWKPASSLHR (166 aa)) lie on the Lumenal side of the membrane. Asparagine 159 carries an N-linked (GlcNAc...) asparagine glycan. A helical membrane pass occupies residues 292–312 (WLAVCGIILVFLLAELNTFYL). Residue lysine 313 is a topological domain, cytoplasmic. Residues 314-334 (FVLWMPPEHYLVLLRLVFFVN) traverse the membrane as a helical segment. Residues 335-354 (VGGVAMREIYDFMDELKPHR) lie on the Lumenal side of the membrane. A helical membrane pass occupies residues 355 to 375 (KLGQQAWLVAAITVTELLIVV). The Cytoplasmic segment spans residues 376 to 381 (KYDPHT). A helical membrane pass occupies residues 382-402 (LTLSLPFYISQCWTLGSILVL). Topologically, residues 403-471 (TWTVWRFFLR…PAEEGPSAAS (69 aa)) are lumenal. Residues 423–471 (RQKQQSHQAINNGDGHPGPEDDLPGTGTAEEEGTTNDGVPAEEGPSAAS) form a disordered region.

This sequence belongs to the phosphatidyl serine synthase family.

The protein resides in the endoplasmic reticulum membrane. The catalysed reaction is a 1,2-diacyl-sn-glycero-3-phosphoethanolamine + L-serine = a 1,2-diacyl-sn-glycero-3-phospho-L-serine + ethanolamine. The enzyme catalyses 1-hexadecanoyl-2-(9Z-octadecenoyl)-sn-glycero-3-phosphoethanolamine + L-serine = 1-hexadecanoyl-2-(9Z-octadecenoyl)-sn-glycero-3-phospho-L-serine + ethanolamine. It carries out the reaction 1-hexadecanoyl-2-(4Z,7Z,10Z,13Z,16Z,19Z-docosahexaenoyl)-sn-glycero-3-phosphoethanolamine + L-serine = 1-hexadecanoyl-2-(4Z,7Z,10Z,13Z,16Z,19Z-docosahexaenoyl)-sn-glycero-3-phosphoserine + ethanolamine. It catalyses the reaction 1-octadecanoyl-2-(5Z,8Z,11Z,14Z)-eicosatetraenoyl-sn-glycero-3-phosphoethanolamine + L-serine = 1-octadecanoyl-2-(5Z,8Z,11Z,14Z)-eicosatetraenoyl-sn-glycero-3-phosphoserine + ethanolamine. The catalysed reaction is 1-octadecanoyl-2-(4Z,7Z,10Z,13Z,16Z,19Z-docosahexaenoyl)-sn-glycero-3-phosphoethanolamine + L-serine = 1-octadecanoyl-2-(4Z,7Z,10Z,13Z,16Z,19Z-docosahexaenoyl)-sn-glycero-3-phosphoserine + ethanolamine. The enzyme catalyses 1-(1Z-octadecenyl)-2-(4Z,7Z,10Z,13Z,16Z,19Z-docosahexaenoyl)-sn-glycero-3-phosphoethanolamine + L-serine = 1-(1Z-octadecenyl)-2-(4Z,7Z,10Z,13Z,16Z,19Z-docosahexaenoyl)-sn-glycero-3-phospho-L-serine + ethanolamine. It carries out the reaction 1-octadecanoyl-2-(9Z-octadecenoyl)-sn-glycero-3-phosphoethanolamine + L-serine = 1-octadecanoyl-2-(9Z-octadecenoyl)-sn-glycero-3-phospho-L-serine + ethanolamine. It catalyses the reaction 1-(1Z-octadecenyl)-2-(9Z-octadecenoyl)-sn-glycero-3-phosphoethanolamine + L-serine = 1-(1Z-octadecenyl)-2-(9Z-octadecenoyl)-sn-glycero-3-phospho-L-serine + ethanolamine. The catalysed reaction is 1-(1Z-octadecenyl)-2-(5Z,8Z,11Z,14Z- eicosatetraenoyl)-sn-glycero-3-phosphoethanolamine + L-serine = 1-(1Z-octadecenyl)-2-(5Z,8Z,11Z,14Z-eicosatetraenoyl)-sn-glycero-3-phospho-L-serine + ethanolamine. It participates in phospholipid metabolism; phosphatidylserine biosynthesis. Its function is as follows. Catalyzes a base-exchange reaction in which the polar head group of phosphatidylethanolamine (PE) or phosphatidylcholine (PC) is replaced by L-serine. Catalyzes the conversion of phosphatatidylethanolamine and does not act on phosphatidylcholine. Can utilize both phosphatidylethanolamine (PE) plasmalogen and diacyl PE as substrate and the latter is six times better utilized, indicating the importance of an ester linkage at the sn-1 position. Although it shows no sn-1 fatty acyl preference, exhibits significant preference towards docosahexaenoic acid (22:6n-3) compared with 18:1 or 20:4 at the sn-2 position. The polypeptide is Phosphatidylserine synthase 2 (Ptdss2) (Rattus norvegicus (Rat)).